The sequence spans 364 residues: tRNA 2-selenouridine synthase (364 aa).

One can recognise a Rhodanese domain in the interval 14–137; it reads LIADTPIIDV…LRQTAIQATI (124 aa). Cysteine 97 acts as the S-selanylcysteine intermediate in catalysis.

The protein belongs to the SelU family. As to quaternary structure, monomer.

It catalyses the reaction 5-methylaminomethyl-2-thiouridine(34) in tRNA + selenophosphate + (2E)-geranyl diphosphate + H2O + H(+) = 5-methylaminomethyl-2-selenouridine(34) in tRNA + (2E)-thiogeraniol + phosphate + diphosphate. It carries out the reaction 5-methylaminomethyl-2-thiouridine(34) in tRNA + (2E)-geranyl diphosphate = 5-methylaminomethyl-S-(2E)-geranyl-thiouridine(34) in tRNA + diphosphate. The catalysed reaction is 5-methylaminomethyl-S-(2E)-geranyl-thiouridine(34) in tRNA + selenophosphate + H(+) = 5-methylaminomethyl-2-(Se-phospho)selenouridine(34) in tRNA + (2E)-thiogeraniol. The enzyme catalyses 5-methylaminomethyl-2-(Se-phospho)selenouridine(34) in tRNA + H2O = 5-methylaminomethyl-2-selenouridine(34) in tRNA + phosphate. In terms of biological role, involved in the post-transcriptional modification of the uridine at the wobble position (U34) of tRNA(Lys), tRNA(Glu) and tRNA(Gln). Catalyzes the conversion of 2-thiouridine (S2U-RNA) to 2-selenouridine (Se2U-RNA). Acts in a two-step process involving geranylation of 2-thiouridine (S2U) to S-geranyl-2-thiouridine (geS2U) and subsequent selenation of the latter derivative to 2-selenouridine (Se2U) in the tRNA chain. The protein is tRNA 2-selenouridine synthase of Escherichia coli (strain SE11).